The sequence spans 94 residues: MTKSELIERIVTHQGQLSAKDVELAIKTMLEQMSQALATGDRIEIRGFGSFSLHYRAPRVGRNPKTGESVRLDGKFVPHFKPGKELRDRVNEPE.

Belongs to the bacterial histone-like protein family. As to quaternary structure, heterodimer of an alpha and a beta chain.

In terms of biological role, this protein is one of the two subunits of integration host factor, a specific DNA-binding protein that functions in genetic recombination as well as in transcriptional and translational control. The sequence is that of Integration host factor subunit beta from Pseudomonas paraeruginosa (strain DSM 24068 / PA7) (Pseudomonas aeruginosa (strain PA7)).